The primary structure comprises 386 residues: Homoserine O-succinyltransferase (386 aa).

In terms of domain architecture, AB hydrolase-1 spans 49-358; it reads NAILICHALS…DAEQGHDSFL (310 aa). Ser156 functions as the Nucleophile in the catalytic mechanism. Arg226 contacts substrate. Catalysis depends on residues Asp321 and His354. Asp355 serves as a coordination point for substrate.

It belongs to the AB hydrolase superfamily. MetX family. In terms of assembly, homodimer.

The protein resides in the cytoplasm. The catalysed reaction is L-homoserine + succinyl-CoA = O-succinyl-L-homoserine + CoA. Its pathway is amino-acid biosynthesis; L-methionine biosynthesis via de novo pathway; O-succinyl-L-homoserine from L-homoserine: step 1/1. Transfers a succinyl group from succinyl-CoA to L-homoserine, forming succinyl-L-homoserine. In Acinetobacter baumannii (strain AB307-0294), this protein is Homoserine O-succinyltransferase.